The following is a 248-amino-acid chain: MRHAFRHSVRTLGLLGLLPVLSACNSLAQMSEIGRPPRMTSITDPTLANSYRPVTMPMPPLQAPPDEAASLWRSGSKAFFKDQRASQVGDLVTIIVDITDNAAFNNGTTADRTADEKFGIPNLFGIKGKVISAITGADSLSTASSSDSGATGKITRNETVTLRLAGTITQVLPNGNFVVMGKQEVRVNSELRELGVSGIVRPQDITADNTVTHDRMAEARISYGGRGTLTQLQTPRYGQQVMDAILPF.

An N-terminal signal peptide occupies residues 1–23 (MRHAFRHSVRTLGLLGLLPVLSA). The N-palmitoyl cysteine moiety is linked to residue Cys-24. Cys-24 is lipidated: S-diacylglycerol cysteine.

Belongs to the FlgH family. As to quaternary structure, the basal body constitutes a major portion of the flagellar organelle and consists of four rings (L,P,S, and M) mounted on a central rod.

It localises to the cell outer membrane. The protein localises to the bacterial flagellum basal body. Its function is as follows. Assembles around the rod to form the L-ring and probably protects the motor/basal body from shearing forces during rotation. The chain is Flagellar L-ring protein from Gluconobacter oxydans (strain 621H) (Gluconobacter suboxydans).